A 125-amino-acid polypeptide reads, in one-letter code: Large ribosomal subunit protein bL12 (125 aa).

The protein belongs to the bacterial ribosomal protein bL12 family. In terms of assembly, homodimer. Part of the ribosomal stalk of the 50S ribosomal subunit. Forms a multimeric L10(L12)X complex, where L10 forms an elongated spine to which 2 to 4 L12 dimers bind in a sequential fashion. Binds GTP-bound translation factors.

Forms part of the ribosomal stalk which helps the ribosome interact with GTP-bound translation factors. Is thus essential for accurate translation. The chain is Large ribosomal subunit protein bL12 from Alkalilimnicola ehrlichii (strain ATCC BAA-1101 / DSM 17681 / MLHE-1).